The following is a 115-amino-acid chain: Probable 4-amino-4-deoxy-L-arabinose-phosphoundecaprenol flippase subunit ArnE (115 aa).

A run of 3 helical transmembrane segments spans residues 42 to 62, 65 to 85, and 93 to 112; these read PWPWLALLALGLGLACWLLLL, VEVGSAYPMLALNFVLVTLVA, and VDRRHLAGLLLIVAGVALLG. The 68-residue stretch at 46–113 folds into the EamA domain; it reads LALLALGLGL…IVAGVALLGR (68 aa).

This sequence belongs to the ArnE family. Heterodimer of ArnE and ArnF.

It is found in the cell inner membrane. The protein operates within bacterial outer membrane biogenesis; lipopolysaccharide biosynthesis. In terms of biological role, translocates 4-amino-4-deoxy-L-arabinose-phosphoundecaprenol (alpha-L-Ara4N-phosphoundecaprenol) from the cytoplasmic to the periplasmic side of the inner membrane. This is Probable 4-amino-4-deoxy-L-arabinose-phosphoundecaprenol flippase subunit ArnE from Pseudomonas paraeruginosa (strain DSM 24068 / PA7) (Pseudomonas aeruginosa (strain PA7)).